We begin with the raw amino-acid sequence, 247 residues long: Putative 2-succinyl-6-hydroxy-2,4-cyclohexadiene-1-carboxylate synthase (247 aa).

An AB hydrolase-1 domain is found at 4–229 (IIFLHGLLGT…CAGHNSHLEN (226 aa)).

Belongs to the AB hydrolase superfamily. MenH family. As to quaternary structure, monomer.

The enzyme catalyses 5-enolpyruvoyl-6-hydroxy-2-succinyl-cyclohex-3-ene-1-carboxylate = (1R,6R)-6-hydroxy-2-succinyl-cyclohexa-2,4-diene-1-carboxylate + pyruvate. It functions in the pathway quinol/quinone metabolism; 1,4-dihydroxy-2-naphthoate biosynthesis; 1,4-dihydroxy-2-naphthoate from chorismate: step 3/7. The protein operates within quinol/quinone metabolism; menaquinone biosynthesis. Catalyzes a proton abstraction reaction that results in 2,5-elimination of pyruvate from 2-succinyl-5-enolpyruvyl-6-hydroxy-3-cyclohexene-1-carboxylate (SEPHCHC) and the formation of 2-succinyl-6-hydroxy-2,4-cyclohexadiene-1-carboxylate (SHCHC). The polypeptide is Putative 2-succinyl-6-hydroxy-2,4-cyclohexadiene-1-carboxylate synthase (Haemophilus influenzae (strain ATCC 51907 / DSM 11121 / KW20 / Rd)).